Reading from the N-terminus, the 127-residue chain is Large ribosomal subunit protein bL20 (127 aa).

Belongs to the bacterial ribosomal protein bL20 family.

Functionally, binds directly to 23S ribosomal RNA and is necessary for the in vitro assembly process of the 50S ribosomal subunit. It is not involved in the protein synthesizing functions of that subunit. The sequence is that of Large ribosomal subunit protein bL20 from Akkermansia muciniphila (strain ATCC BAA-835 / DSM 22959 / JCM 33894 / BCRC 81048 / CCUG 64013 / CIP 107961 / Muc).